A 533-amino-acid polypeptide reads, in one-letter code: Beta-glucosidase 10 (533 aa).

An N-terminal signal peptide occupies residues methionine 1 to alanine 23. Glutamine 53 lines the a beta-D-glucoside pocket. Residue asparagine 122 is glycosylated (N-linked (GlcNAc...) asparagine). Residues histidine 157 and asparagine 202–glutamate 203 contribute to the a beta-D-glucoside site. Glutamate 203 acts as the Proton donor in catalysis. A disulfide bridge connects residues cysteine 222 and cysteine 230. Tyrosine 369 is a binding site for a beta-D-glucoside. The N-linked (GlcNAc...) asparagine glycan is linked to asparagine 384. Glutamate 440 contacts a beta-D-glucoside. Glutamate 440 (nucleophile) is an active-site residue. An N-linked (GlcNAc...) asparagine glycan is attached at asparagine 448. A beta-D-glucoside is bound by residues tryptophan 489, glutamate 496 to tryptophan 497, and phenylalanine 505.

The protein belongs to the glycosyl hydrolase 1 family.

It carries out the reaction Hydrolysis of terminal, non-reducing beta-D-glucosyl residues with release of beta-D-glucose.. The chain is Beta-glucosidase 10 (BGLU10) from Oryza sativa subsp. japonica (Rice).